An 861-amino-acid chain; its full sequence is Linoleate 9S-lipoxygenase 2 (861 aa).

A PLAT domain is found at 29–160; that stretch reads NALDFTDLAG…RYKSDRIFFV (132 aa). Residues 163–861 form the Lipoxygenase domain; sequence PYLPSKTPEL…GKGIPNSVSI (699 aa). Residues 212–246 are disordered; that stretch reads EGKENVRTTLGGSAEYPYPRRGRTGRPPTRTDPKS. His522, His527, His713, Asn717, and Ile861 together coordinate Fe cation.

Belongs to the lipoxygenase family. In terms of assembly, monomer. It depends on Fe cation as a cofactor. Highly expressed in tubers and roots. Detected in flower buds and leaves.

It is found in the cytoplasm. It carries out the reaction (9Z,12Z)-octadecadienoate + O2 = (9S)-hydroperoxy-(10E,12Z)-octadecadienoate. It participates in lipid metabolism; oxylipin biosynthesis. Plant lipoxygenases may be involved in a number of diverse aspects of plant physiology including growth and development, pest resistance, and senescence or responses to wounding. Catalyzes the hydroperoxidation of lipids containing a cis,cis-1,4-pentadiene structure. Linoleic acid is the preferred substrate, but is also active with linolenic and arachidonic acids. The sequence is that of Linoleate 9S-lipoxygenase 2 (LOX1.2) from Solanum tuberosum (Potato).